Here is an 81-residue protein sequence, read N- to C-terminus: Putative phytosulfokines 6 (81 aa).

The first 20 residues, Met-1–Ala-20, serve as a signal peptide directing secretion. A propeptide spanning residues Ile-21–Asp-72 is cleaved from the precursor. Residues Tyr-73 and Tyr-75 each carry the sulfotyrosine modification. The propeptide occupies His-78 to His-81.

This sequence belongs to the phytosulfokine family. Post-translationally, sulfation is important for activity and for the binding to a putative membrane receptor. In terms of processing, PSK-beta is an enzymatic derivative of PSK-alpha. As to expression, expressed in roots, leaves, stems, flowers and siliques. Most abundant in vascular bundles and in root tips.

Its subcellular location is the secreted. Functionally, promotes plant cell differentiation, organogenesis and somatic embryogenesis as well as cell proliferation. This is Putative phytosulfokines 6 (PSK6) from Arabidopsis thaliana (Mouse-ear cress).